The sequence spans 496 residues: Deoxyribodipyrimidine photo-lyase (496 aa).

The Photolyase/cryptochrome alpha/beta domain maps to 28-160 (GPVVYWMFRD…EVDAHNVVPM (133 aa)). Residues Tyr-256, 269–273 (LSGLS), 307–315 (ELIVRRELS), and 415–417 (DGR) contribute to the FAD site. Glu-307 contributes to the DNA binding site.

It belongs to the DNA photolyase class-2 family. The cofactor is FAD. In terms of tissue distribution, highly expressed in flowers. Expressed in roots and stems.

Its subcellular location is the nucleus. The enzyme catalyses cyclobutadipyrimidine (in DNA) = 2 pyrimidine residues (in DNA).. Its function is as follows. Involved in repair of UV radiation-induced DNA damage. Catalyzes the light-dependent monomerization (300-600 nm) of cyclobutylpyrimidine dimers (CPDs), which are formed between adjacent bases on the same DNA strand upon exposure to ultraviolet radiation. Required for plant survival in the presence of UV-B light. Not involved in the repair of (6-4) photoproducts. In Arabidopsis thaliana (Mouse-ear cress), this protein is Deoxyribodipyrimidine photo-lyase (PHR1).